We begin with the raw amino-acid sequence, 933 residues long: Protein translocase subunit SecA (933 aa).

ATP is bound by residues Q87, 105 to 109, and D515; that span reads GEGKT. Disordered regions lie at residues 567–588, 840–861, and 880–933; these read ESRRIDNQLRGRSGRQGDPGSS, DVEAVEEQRRQEAERMQMRHAA, and AAAE…CGKL. A compositionally biased stretch (basic and acidic residues) spans 845-856; the sequence is EEQRRQEAERMQ. Residues 880-897 are compositionally biased toward low complexity; the sequence is AAAEGDSAPTGGAQQQSA. The span at 905 to 914 shows a compositional bias: basic and acidic residues; it reads VAREGPKVGR. C918, C920, C929, and C930 together coordinate Zn(2+). The span at 924-933 shows a compositional bias: basic residues; the sequence is KKYKHCCGKL.

This sequence belongs to the SecA family. Monomer and homodimer. Part of the essential Sec protein translocation apparatus which comprises SecA, SecYEG and auxiliary proteins SecDF-YajC and YidC. Requires Zn(2+) as cofactor.

The protein localises to the cell inner membrane. It localises to the cytoplasm. The catalysed reaction is ATP + H2O + cellular proteinSide 1 = ADP + phosphate + cellular proteinSide 2.. Functionally, part of the Sec protein translocase complex. Interacts with the SecYEG preprotein conducting channel. Has a central role in coupling the hydrolysis of ATP to the transfer of proteins into and across the cell membrane, serving both as a receptor for the preprotein-SecB complex and as an ATP-driven molecular motor driving the stepwise translocation of polypeptide chains across the membrane. This Halorhodospira halophila (strain DSM 244 / SL1) (Ectothiorhodospira halophila (strain DSM 244 / SL1)) protein is Protein translocase subunit SecA.